The following is a 270-amino-acid chain: tRNA pseudouridine synthase A (270 aa).

Catalysis depends on D60, which acts as the Nucleophile. Residues F107 to F111 form an RNA binding region. Y118 lines the substrate pocket. An interaction with tRNA region spans residues Q168–R172.

This sequence belongs to the tRNA pseudouridine synthase TruA family. As to quaternary structure, homodimer.

It carries out the reaction uridine(38/39/40) in tRNA = pseudouridine(38/39/40) in tRNA. Functionally, formation of pseudouridine at positions 38, 39 and 40 in the anticodon stem and loop of transfer RNAs. This Shigella sonnei (strain Ss046) protein is tRNA pseudouridine synthase A.